Here is a 236-residue protein sequence, read N- to C-terminus: CD81 protein (236 aa).

The Cytoplasmic segment spans residues 1–12 (MGVEGCTKCIKY). The chain crosses the membrane as a helical span at residues 13-33 (LLFVFNFVFWLAGGVILGVAL). Over 34 to 63 (WLRHDPQTTNLLYLELGDKPAPNTFYVGIY) the chain is Extracellular. Residues 64–84 (ILIAVGAVMMFVGFLGCYGAI) form a helical membrane-spanning segment. Residues 85–89 (QESQC) are Cytoplasmic-facing. Residues 90–112 (LLGTFFTCLVILFACEVAAGIWG) form a helical membrane-spanning segment. Over 113 to 201 (FVNKDQIAKD…QKIDELFSGK (89 aa)) the chain is Extracellular. 2 cysteine pairs are disulfide-bonded: Cys-156–Cys-190 and Cys-157–Cys-175. A helical transmembrane segment spans residues 202-224 (LYLIGIAAIVVAVIMIFEMILSM). Glu-219 is a cholesterol binding site. The Cytoplasmic portion of the chain corresponds to 225–236 (VLCCGIRNSSVY).

The protein belongs to the tetraspanin (TM4SF) family. Homodimer. Part of a complex composed of CD19, CR2/CD21, CD81 and IFITM1/CD225 in the membrane of mature B cells. Interacts (via the second extracellular domain) with CD19; this interaction is initiated early during biosynthesis in the ER and enables trafficking of only properly folded CD19. Part of a complex that includes MHC class II/HLA-DR molecules and IFITM1. Interacts with IFITM1. Interacts with IFITM2 and IFITM3. Part of integrin-tetraspanin complex composed of CD9, CD81, beta-1 and beta-2 integrins in the membrane of monocyte/macrophages. Interacts (via the second extracellular domain) with integrin ITGAV:ITGB3. Interacts with CD247/CD3 zeta, ICAM1 and CD9 at the immune synapse on T cell membrane. Part of a GPCR-tetraspanin complex consisting at least of ADGRG1, CD81, possibly CD9, and GNA11 in which CD81 enhances the association of ADGRG1 with GNA11. Part of a complex composed of CD9, CD81, PTGFRN and IGSF8. Interacts directly with IGSF8. Interacts with CD53 and SCIMP. Interacts with SAMHD1 (via its C-terminus). Interacts with glypican GPC3 and with the transcriptional repressor HHEX; binding to GPC3 decreases the availability of free CD81 for binding to HHEX, resulting in nuclear translocation of HHEX and transcriptional repression. Interacts with CLDN1. Interacts with CLDN6 and CLDN9. Post-translationally, not glycosylated. In terms of processing, likely constitutively palmitoylated at low levels. Protein palmitoylation is up-regulated upon coligation of BCR and CD9-C2R-CD81 complexes in lipid rafts.

The protein resides in the cell membrane. It is found in the basolateral cell membrane. Functionally, structural component of specialized membrane microdomains known as tetraspanin-enriched microdomains (TERMs), which act as platforms for receptor clustering and signaling. Essential for trafficking and compartmentalization of CD19 receptor on the surface of activated B cells. Upon initial encounter with microbial pathogens, enables the assembly of CD19-CR2/CD21 and B cell receptor (BCR) complexes at signaling TERMs, lowering the threshold dose of antigen required to trigger B cell clonal expansion and antibody production. In T cells, facilitates the localization of CD247/CD3 zeta at antigen-induced synapses with B cells, providing for costimulation and polarization toward T helper type 2 phenotype. Present in MHC class II compartments, may also play a role in antigen presentation. Can act both as positive and negative regulator of homotypic or heterotypic cell-cell fusion processes. Positively regulates sperm-egg fusion and may be involved in acrosome reaction. In myoblasts, associates with CD9 and PTGFRN and inhibits myotube fusion during muscle regeneration. In macrophages, associates with CD9 and beta-1 and beta-2 integrins, and prevents macrophage fusion into multinucleated giant cells specialized in ingesting complement-opsonized large particles. Also prevents the fusion of mononuclear cell progenitors into osteoclasts in charge of bone resorption. May regulate the compartmentalization of enzymatic activities. In T cells, defines the subcellular localization of dNTPase SAMHD1 and permits its degradation by the proteasome, thereby controlling intracellular dNTP levels. Also involved in cell adhesion and motility. Positively regulates integrin-mediated adhesion of macrophages, particularly relevant for the inflammatory response in the lung. The sequence is that of CD81 protein (CD81) from Saguinus oedipus (Cotton-top tamarin).